A 418-amino-acid polypeptide reads, in one-letter code: MIFDKDNFKEFDQELWQAIHDEEIRQQNNIELIASENVVSKAVMAAQGSVLTNKYAEGYPSHRYYGGTDCVDVVESLAIERAKTLFNAEFANVQPHSGSQANAAAYMALIEPGDTVLGMDLAAGGHLTHGASVSFSGKTYHFVSYSVDPKTEMLDYDNILKIAQETQPKLIVAGASAYSRIIDFEKFRQIADAVDAYLMVDMAHIAGLVASGHHPSPIPYAHVTTTTTHKTLRGPRGGLILTNDEAIAKKINSAVFPGLQGGPLEHVIAAKAVALKEALDPSFKIYGEDIIKNAQAMAKVFKEDDDFHLISDGTDNHLFLVDVTKVIENGKKAQNVLEEVNITLNKNSIPFERLSPFKTSGIRIGTPAITSRGMGVEESRRIAELMIKALKNHENQDILTEVRQEIKSLTDAFPLYEN.

(6S)-5,6,7,8-tetrahydrofolate is bound by residues Leu-121 and 125–127 (GHL). Position 230 is an N6-(pyridoxal phosphate)lysine (Lys-230). A (6S)-5,6,7,8-tetrahydrofolate-binding site is contributed by 355–357 (SPF).

This sequence belongs to the SHMT family. As to quaternary structure, homodimer. It depends on pyridoxal 5'-phosphate as a cofactor.

Its subcellular location is the cytoplasm. It carries out the reaction (6R)-5,10-methylene-5,6,7,8-tetrahydrofolate + glycine + H2O = (6S)-5,6,7,8-tetrahydrofolate + L-serine. It participates in one-carbon metabolism; tetrahydrofolate interconversion. The protein operates within amino-acid biosynthesis; glycine biosynthesis; glycine from L-serine: step 1/1. Its function is as follows. Catalyzes the reversible interconversion of serine and glycine with tetrahydrofolate (THF) serving as the one-carbon carrier. This reaction serves as the major source of one-carbon groups required for the biosynthesis of purines, thymidylate, methionine, and other important biomolecules. Also exhibits THF-independent aldolase activity toward beta-hydroxyamino acids, producing glycine and aldehydes, via a retro-aldol mechanism. This chain is Serine hydroxymethyltransferase, found in Streptococcus agalactiae serotype III (strain NEM316).